The chain runs to 413 residues: Aminopeptidase PepS (413 aa).

Residues E253, E319, E343, H348, H381, and D383 each contribute to the a divalent metal cation site.

Belongs to the peptidase M29 family. In terms of assembly, monomer. Requires Co(2+) as cofactor. It depends on Zn(2+) as a cofactor. Mg(2+) is required as a cofactor.

In terms of biological role, exhibits a high specificity towards peptides possessing arginine or aromatic amino acids at the N-terminus. Could be involved both in bacterial growth by supplying amino acids. This is Aminopeptidase PepS (pepS) from Streptococcus thermophilus.